The following is a 513-amino-acid chain: Interferon alpha/beta receptor 2 (513 aa).

Positions 1 to 21 are cleaved as a signal peptide; that stretch reads MRSRCTVSAVGLLSLCLVVSA. The Extracellular segment spans residues 22-242; sequence SLETITPSAF…GQESGLSESA (221 aa). Disulfide bonds link cysteine 39–cysteine 123 and cysteine 85–cysteine 93. N-linked (GlcNAc...) asparagine glycans are attached at residues asparagine 42, asparagine 58, asparagine 65, asparagine 78, and asparagine 84. Asparagine 149, asparagine 191, and asparagine 195 each carry an N-linked (GlcNAc...) asparagine glycan. Cysteine 210 and cysteine 227 are oxidised to a cystine. The helical transmembrane segment at 243-263 threads the bilayer; it reads IVGITTSCLVVMVFVSTIVML. Residues 264-513 are Cytoplasmic-facing; that stretch reads KRIGYICLKD…ADVGDGYIMR (250 aa). Residues 334–402 are disordered; sequence GYTMHGLTGK…DPTGPYERRK (69 aa). Position 335 is a phosphotyrosine (tyrosine 335). The segment covering 344–354 has biased composition (polar residues); that stretch reads PLQQTSDTSAS. Low complexity predominate over residues 377 to 389; sequence GAEPELPTEAGAG. Serine 403 is subject to Phosphoserine. The mediates interaction with STAT2 (and required for the recruitment of USP18) stretch occupies residues 421–444; that stretch reads GDNIIFNVNLNSVFLRVLHDEDAS. Phosphoserine is present on residues serine 448 and serine 465. The interval 458 to 513 is disordered; sequence EGPQRTESDLRIAGGDRTQPPLPSLPSQDLWTEDGSSEKSDTSDSDADVGDGYIMR. Tyrosine 510 is subject to Phosphotyrosine.

The protein belongs to the type II cytokine receptor family. Heterodimer with IFNAR1; forming the receptor for type I interferon. Interacts with the transcriptional factors STAT1 and STAT2. Interacts with JAK1. Interacts with USP18; indirectly via STAT2, it negatively regulates the assembly of the ternary interferon-IFNAR1-IFNAR2 complex and therefore type I interferon signaling. Phosphorylated on tyrosine residues upon interferon binding. Phosphorylation at Tyr-335 or Tyr-510 are sufficient to mediate interferon dependent activation of STAT1, STAT2 and STAT3 leading to antiproliferative effects on many different cell types. Widely expressed. Detected in liver, testis, kidney, salivary gland, thymus, brain, lung and placenta. Isoform 1, isoform 2 and isoform 3 are expressed in brain.

It localises to the cell membrane. Its subcellular location is the secreted. Functionally, together with IFNAR1, forms the heterodimeric receptor for type I interferons (including interferons alpha, beta, epsilon, omega and kappa). Type I interferon binding activates the JAK-STAT signaling cascade, resulting in transcriptional activation or repression of interferon-regulated genes that encode the effectors of the interferon response. Mechanistically, type I interferon-binding brings the IFNAR1 and IFNAR2 subunits into close proximity with one another, driving their associated Janus kinases (JAKs) (TYK2 bound to IFNAR1 and JAK1 bound to IFNAR2) to cross-phosphorylate one another. The activated kinases phosphorylate specific tyrosine residues on the intracellular domains of IFNAR1 and IFNAR2, forming docking sites for the STAT transcription factors (STAT1, STAT2 and STAT). STAT proteins are then phosphorylated by the JAKs, promoting their translocation into the nucleus to regulate expression of interferon-regulated genes. May be potent inhibitors of type I IFN receptor activity. The sequence is that of Interferon alpha/beta receptor 2 (Ifnar2) from Mus musculus (Mouse).